We begin with the raw amino-acid sequence, 575 residues long: DNA polymerase (575 aa).

Residues 1–191 (MKHMPRKMYS…KQGLDRMTAG (191 aa)) form a 3'-5' exonuclease and strand displacement activities region. Asp145 and Asp169 together coordinate Mg(2+). Residues 192–229 (SDSLKGFKDIITTKKFKKVFPTLSLGLDKEVRYAYRGG) are involved in DNA-binding, coordination between DNA synthesis and degradation and TP interaction. The tract at residues 230 to 562 (FTWLNDRFKE…KMKPKPVQVP (333 aa)) is initiation, polymerization and pyrophosphorolytic activities. Residues Asp249 and Val250 each coordinate Mg(2+). 5-methyl-UTP is bound by residues Tyr254, Lys371, and Lys383. The tract at residues 398–420 (DVTGKVPYLKENGALGFRLGEEE) is TPR2. Positions 454–458 (YCDTD) match the YCDTD motif. Positions 456 and 458 each coordinate Mg(2+). Asp458 contacts 5-methyl-UTP. Residues 563–575 (GGVVLVDDTFTIK) form an involved in DNA-binding and TP interaction region.

The protein belongs to the DNA polymerase type-B family. Interacts with the primer terminal protein; this interaction allows the initiation of TP-primed DNA replication at both viral DNA ends. Interacts with DNA. Mg(2+) is required as a cofactor.

The catalysed reaction is DNA(n) + a 2'-deoxyribonucleoside 5'-triphosphate = DNA(n+1) + diphosphate. Its function is as follows. Polymerase responsible for protein-primed viral DNA replication by strand displacement with high processivity and fidelity. To start replication, the DNA polymerase forms a heterodimer with a free primer terminal protein (TP), recognizes the replication origins at both 5' ends of the linear chromosome, and initiates replication using as primer the OH-group of Ser-232 of the TP. This polymerase possesses three enzymatic activities: DNA synthesis (polymerase), primer terminal protein (TP) deoxynucleotidylation, which is the formation of a covalent linkage (phosphoester) between the hydroxyl group of a specific serine residue in TP and 5'-dAMP, a reaction directed by the second T at the 3' end, and 3' to 5' exonuclease activity. Exonuclease activity has a proofreading purpose. DNA polymerase edits the polymerization errors using an intramolecular pathway as the primer terminus travels from one active site to the other without dissociation from the DNA. DNA polymerization catalyzed by the DNA polymerase is a highly accurate process, but the protein-primed initiation is a quite inaccurate reaction. Since the polymerase initiates the replication on the second thymine, the TP-dAMP initiation product translocates backwards to recover the template information of the first nucleotide (sliding back-mechanism). This is DNA polymerase (2) from Bacillus subtilis (Bacteriophage phi-29).